The primary structure comprises 356 residues: MADAAVIEKLEAGFKKLEAATDCKSLLKKYLSKAVFDQLKEKKTSLGATLLDVIQSGVENLDSGVGIYAPDAEAYTLFSPLFDPIIEDYHVGFKQTDKHPNKDFGDVNTFVNVDPEGKYVISTRVRCGRSMEGYPFNPCLTEAQYKEMEAKVSSTLSSLEGELKGTYYPLTGMSKEVQQKLIDDHFLFKEGDRFLQAANACRYWPAGRGIYHNDNKTFLVWVNEEDHLRIISMQMGGDLGQVFRRLTSAVNEIEKRIPFSHHDRLGFLTFCPTNLGTTVRASVHIKLPKLAANREKLEEVAGKYNLQVRGTRGEHTEAEGGIYDISNKRRMGLTEFQAVKEMQDGILELIKMEKEM.

An N-acetylalanine modification is found at alanine 2. Positions 9–91 constitute a Phosphagen kinase N-terminal domain; the sequence is KLEAGFKKLE…FDPIIEDYHV (83 aa). 64–68 serves as a coordination point for L-arginine; that stretch reads GVGIY. The 238-residue stretch at 119–356 folds into the Phosphagen kinase C-terminal domain; the sequence is YVISTRVRCG…LELIKMEKEM (238 aa). ATP is bound by residues 122–126 and histidine 185; that span reads STRVR. Glutamate 225 contributes to the L-arginine binding site. Arginine 229 is a binding site for ATP. L-arginine is bound at residue cysteine 271. ATP-binding positions include 280–284 and 309–314; these read RASVH and RGTRGE. Glutamate 314 contributes to the L-arginine binding site.

The protein belongs to the ATP:guanido phosphotransferase family.

It catalyses the reaction L-arginine + ATP = N(omega)-phospho-L-arginine + ADP + H(+). This Penaeus monodon (Giant tiger prawn) protein is Arginine kinase.